The primary structure comprises 210 residues: Dephospho-CoA kinase (210 aa).

The DPCK domain occupies tryptophan 4–lysine 202. Glycine 12–alanine 17 contacts ATP.

It belongs to the CoaE family.

The protein resides in the cytoplasm. It carries out the reaction 3'-dephospho-CoA + ATP = ADP + CoA + H(+). It functions in the pathway cofactor biosynthesis; coenzyme A biosynthesis; CoA from (R)-pantothenate: step 5/5. In terms of biological role, catalyzes the phosphorylation of the 3'-hydroxyl group of dephosphocoenzyme A to form coenzyme A. The sequence is that of Dephospho-CoA kinase from Neisseria gonorrhoeae (strain ATCC 700825 / FA 1090).